Reading from the N-terminus, the 449-residue chain is Polyadenylation factor subunit 2 (449 aa).

7 WD repeats span residues 77-116, 119-158, 161-200, 203-242, 245-285, 288-328, and 337-376; these read KVKH…FESI, AHDS…VKVL, AHTE…QERV, GHHW…NVST, GLKH…RELQ, RDDM…SNST, and AHEK…DPNA. The disordered stretch occupies residues 411–432; sequence LPPANETNLGTPQPSILGSESI. The segment covering 415–432 has biased composition (polar residues); that stretch reads NETNLGTPQPSILGSESI.

Its subcellular location is the nucleus. In terms of biological role, required for 3'-end cleavage and polyadenylation of pre-mRNAs. Also involved in chromosome segregation where it has a role in chromosome attachment to the mitotic spindle. In Eremothecium gossypii (strain ATCC 10895 / CBS 109.51 / FGSC 9923 / NRRL Y-1056) (Yeast), this protein is Polyadenylation factor subunit 2 (PSF2).